Reading from the N-terminus, the 61-residue chain is Metallothionein-2D (61 aa).

Position 1 is an N-acetylmethionine (Met1). The interval 1–29 (MDPNCSCATRDSCACASSCKCKECKCTSC) is beta. Residues Cys5, Cys7, Cys13, Cys15, Cys19, Cys21, Cys24, Cys26, Cys29, Cys33, Cys34, Cys36, Cys37, Cys41, Cys44, Cys48, Cys50, Cys57, Cys59, and Cys60 each contribute to the a divalent metal cation site. Residues 30–61 (KKSCCSCCPAGCTKCAQGCICKGASDKCSCCA) are alpha.

It belongs to the metallothionein superfamily. Type 1 family. Monomer.

Metallothioneins have a high content of cysteine residues that bind various heavy metals; these proteins are transcriptionally regulated by both heavy metals and glucocorticoids. The chain is Metallothionein-2D from Oryctolagus cuniculus (Rabbit).